Consider the following 216-residue polypeptide: Peptide methionine sulfoxide reductase MsrA (216 aa).

The active site involves C54.

The protein belongs to the MsrA Met sulfoxide reductase family.

It carries out the reaction L-methionyl-[protein] + [thioredoxin]-disulfide + H2O = L-methionyl-(S)-S-oxide-[protein] + [thioredoxin]-dithiol. The enzyme catalyses [thioredoxin]-disulfide + L-methionine + H2O = L-methionine (S)-S-oxide + [thioredoxin]-dithiol. Functionally, has an important function as a repair enzyme for proteins that have been inactivated by oxidation. Catalyzes the reversible oxidation-reduction of methionine sulfoxide in proteins to methionine. In Xanthomonas euvesicatoria pv. vesicatoria (strain 85-10) (Xanthomonas campestris pv. vesicatoria), this protein is Peptide methionine sulfoxide reductase MsrA.